The chain runs to 65 residues: Large ribosomal subunit protein uL30 (65 aa).

The protein belongs to the universal ribosomal protein uL30 family. As to quaternary structure, part of the 50S ribosomal subunit.

This is Large ribosomal subunit protein uL30 from Brucella suis (strain ATCC 23445 / NCTC 10510).